A 254-amino-acid chain; its full sequence is Alcohol dehydrogenase (254 aa).

An NAD(+)-binding site is contributed by 10-33; it reads FVAGLGGIGLDTSREIVKSGPKNL. Position 138 (S138) interacts with substrate. Y151 functions as the Proton acceptor in the catalytic mechanism.

Belongs to the short-chain dehydrogenases/reductases (SDR) family. In terms of assembly, homodimer.

It catalyses the reaction a primary alcohol + NAD(+) = an aldehyde + NADH + H(+). The enzyme catalyses a secondary alcohol + NAD(+) = a ketone + NADH + H(+). The chain is Alcohol dehydrogenase (Adh) from Drosophila grimshawi (Hawaiian fruit fly).